A 1113-amino-acid polypeptide reads, in one-letter code: Protein MGA2 (1113 aa).

A disordered region spans residues 91 to 114; that stretch reads TPLEEEMESNRALKEEEEDEHENK. A Phosphoserine modification is found at Ser255. Polar residues-rich tracts occupy residues 344-357 and 437-452; these read DTTK…SSRR and HIPS…SESF. 2 disordered regions span residues 344-376 and 437-462; these read DTTK…NNQL and HIPS…NDNP. At Ser467 the chain carries Phosphoserine. The 81-residue stretch at 530–610 folds into the IPT/TIG domain; that stretch reads PSINRVIPSQ…NENNNDDLPQ (81 aa). Positions 658-687 are disordered; sequence IVGNDSPDSGTNGNSCSKSTGPSPNQHSMN. Over residues 663–687 the composition is skewed to polar residues; it reads SPDSGTNGNSCSKSTGPSPNQHSMN. ANK repeat units lie at residues 719-748 and 752-781; these read LGRT…RVND and FGLT…NYSL. Residues 1037–1054 traverse the membrane as a helical segment; that stretch reads MLIFFWIPLTLLLLTWFI.

It is found in the membrane. The polypeptide is Protein MGA2 (MGA2) (Saccharomyces cerevisiae (strain ATCC 204508 / S288c) (Baker's yeast)).